Reading from the N-terminus, the 148-residue chain is Protein SOB FIVE-LIKE 1 (148 aa).

Over residues 1–10 (MESPRNHGGS) the composition is skewed to basic and acidic residues. 2 disordered regions span residues 1-20 (MESP…SCES) and 33-148 (NDQS…SKTK). The SOFL-A motif lies at 20–25 (SGWTMY). Over residues 54 to 76 (DGYENDDGDTSDDGGDEESDDSM) the composition is skewed to acidic residues. The SOFL-B signature appears at 75 to 84 (SMASDASSGP). Residues 91–101 (HINKHAARKNG) are compositionally biased toward basic residues. A compositionally biased stretch (basic and acidic residues) spans 111–128 (QHTEKTISNEGEKSDLKA).

Belongs to the SOFL plant protein family. As to expression, predominantly expressed in the vascular tissues of seedlings, developing leaves, flowers and siliques, but barely detectable in roots and stems.

The protein resides in the cytoplasm. It localises to the nucleus. Functionally, involved in cytokinin-mediated development. Together with SOFL2, triggers the endogenous content of specific bioactive cytokinins derived from the biosynthetic intermediates trans-zeatin riboside monophosphate (tZRMP) and N(6)-(Delta(2)-isopentenyl)adenosine monophosphate (iPRMP) such as N-glucosides trans-zeatin 7-glucoside (tZ7G), cis-zeatin 7-glucoside (cZ7G) and N(6)-(Delta(2)-isopentenyl)adenine 7-glucoside (iP7G). The protein is Protein SOB FIVE-LIKE 1 of Arabidopsis thaliana (Mouse-ear cress).